The sequence spans 299 residues: Probable lipid kinase YegS (299 aa).

One can recognise a DAGKc domain in the interval 2–133; that stretch reads AEFPASLLIL…IDMAQVNKQT (132 aa). ATP contacts are provided by residues Thr-40, 66 to 72, and Thr-95; that span reads GDGTINE. Residues Leu-215, Asp-218, and Leu-220 each contribute to the Mg(2+) site. Glu-271 serves as the catalytic Proton acceptor.

Belongs to the diacylglycerol/lipid kinase family. YegS lipid kinase subfamily. Mg(2+) is required as a cofactor. The cofactor is Ca(2+).

It is found in the cytoplasm. Functionally, probably phosphorylates lipids; the in vivo substrate is unknown. This Escherichia coli O17:K52:H18 (strain UMN026 / ExPEC) protein is Probable lipid kinase YegS.